The chain runs to 1782 residues: AF4/FMR2 family member lilli (1782 aa).

14 disordered regions span residues 42–84 (NMED…PSEG), 150–313 (ASSS…PPPE), 434–515 (MPTP…QQQQ), 605–637 (GGSSGSCMGTMSSSSSSNKTPSPTDSNRWNLSR), 691–732 (EKLH…QQRY), 768–820 (GALP…LQIP), 839–891 (KVQP…SNKK), 911–1064 (VAAA…AAAS), 1091–1126 (AGNSSSSSKAKRRYSVGSSSNSSSSSETEEQQQHKQ), 1166–1234 (LPQS…KQGQ), 1296–1327 (ARQHHHQPERLKAQQNGHLSSRSAEGARTPKD), 1386–1420 (LKQELPARRRKRSSSSSSSPYKEKKRKKEKAEQLS), 1450–1484 (QESAANGSPNKLQQQQQQSRLSQSQQQQQQQQQQQ), and 1674–1701 (GNTPSSISPSNSVGSQGSGSNTPPGKIV). A compositionally biased stretch (basic and acidic residues) spans 54-80 (REKYERQQGIQSDDRETSLFGEPRRLN). 2 stretches are compositionally biased toward low complexity: residues 164 to 180 (QQQQQQQQQQQHYQQQQ) and 211 to 260 (PSSS…MSSP). The segment covering 435–447 (PTPPKASPTPPAI) has biased composition (pro residues). Threonine 443 is modified (phosphothreonine). The span at 450–463 (MKTEKNHSLEKQDS) shows a compositional bias: basic and acidic residues. Residues 465 to 475 (LENDLELSESD) show a composition bias toward acidic residues. Phosphoserine occurs at positions 472 and 474. 2 stretches are compositionally biased toward low complexity: residues 484–515 (SAGNSSNSSESDSSESGSEASSKGDTQQQQQQ) and 609–622 (GSCMGTMSSSSSSN). The segment covering 623–634 (KTPSPTDSNRWN) has biased composition (polar residues). Positions 691 to 701 (EKLHDEPRHVG) are enriched in basic and acidic residues. Composition is skewed to low complexity over residues 714-730 (QQQQQQQQQQQQQQQQQ) and 782-805 (SDSGSASSGSGSGSSSSDSAGGSS). Residues 859 to 869 (PRQKKPRKKKM) show a composition bias toward basic residues. Serine 878 and serine 879 each carry phosphoserine. The a.T hook DNA-binding region spans 920-932 (KKGRGRPRKQAQQ). Residues 929-972 (QAQQQQQQQQQQLQQSGNLSSASASSSQAKGPTLTAAKKPLAKA) show a composition bias toward low complexity. A phosphoserine mark is found at serine 949 and serine 951. Polar residues predominate over residues 973–982 (SVSNSNSTAP). Low complexity-rich tracts occupy residues 996 to 1018 (SNSSSNSNTPTKKPTATFATMAA), 1033 to 1064 (SSSSSCSSTKSSSSSGSDSETPAAAAAGAAAS), 1105 to 1116 (SVGSSSNSSSSS), and 1174 to 1196 (SSSDCSSSSNSDSSSNSSGSSSS). The segment covering 1308-1318 (AQQNGHLSSRS) has biased composition (polar residues). Positions 1450–1460 (QESAANGSPNK) are enriched in polar residues. Serine 1457 is subject to Phosphoserine. Low complexity-rich tracts occupy residues 1461-1484 (LQQQQQQSRLSQSQQQQQQQQQQQ) and 1674-1694 (GNTPSSISPSNSVGSQGSGSN).

This sequence belongs to the AF4 family.

It is found in the nucleus. Has a role in transcriptional regulation. Acts in parallel with the Ras/MAPK and the PI3K/PKB pathways in the control of cell identity and cellular growth. Essential for regulation of the cytoskeleton and cell growth but not for cell proliferation or growth rate. Required specifically for the microtubule-based basal transport of lipid droplets. Plays a partially redundant function downstream of Raf in cell fate specification in the developing eye. Pair-rule protein that regulates embryonic cellularization, gastrulation and segmentation. The polypeptide is AF4/FMR2 family member lilli (Drosophila mojavensis (Fruit fly)).